We begin with the raw amino-acid sequence, 733 residues long: Hypermethylated in cancer 1 protein (733 aa).

A BTB domain is found at 47–110 (CDVIIVVQNA…IYTGRLADGA (64 aa)). The segment at 154 to 315 (KYCHLRGGGG…PFRGGSGSPG (162 aa)) is mediates HDAC-dependent transcriptional repression. Position 159 is an omega-N-methylarginine (Arg159). The interval 189–209 (YPSPVGPPPPPAAEPPSGPEA) is disordered. Residues 192–206 (PVGPPPPPAAEPPSG) show a composition bias toward pro residues. Ser237 bears the Phosphoserine mark. The interaction with CTBP1 stretch occupies residues 241-247 (GLDLSKK). A disordered region spans residues 241 to 421 (GLDLSKKSPP…PGGHLEGYPC (181 aa)). Residue Ser248 is modified to Phosphoserine. A compositionally biased stretch (pro residues) spans 284-293 (LALPSLPPLP). Lys333 is modified (N6-acetyllysine; alternate). A Glycyl lysine isopeptide (Lys-Gly) (interchain with G-Cter in SUMO); alternate cross-link involves residue Lys333. Residues 344-361 (ELGRERGSPSERCEERGG) are compositionally biased toward basic and acidic residues. Ser366 carries the phosphoserine modification. Pro residues predominate over residues 368-380 (GGPPLGLAPPPRY). 5 C2H2-type zinc fingers span residues 439 to 459 (CIPCGKGFPSSEQLNAHVEAH), 509 to 529 (CASCDKSYKDPATLRQHEKTH), 537 to 557 (CTICGKKFTQRGTMTRHMRSH), 565 to 585 (CDACGMRFTRQYRLTEHMRIH), and 593 to 613 (CQVCGGKFAQQRNLISHMKMH). Ser704 carries the phosphoserine modification.

Belongs to the krueppel C2H2-type zinc-finger protein family. Hic subfamily. In terms of assembly, self-associates. Interacts with HIC2. Interacts with CTBP1 and CTBP2. Interacts with TCF7L2 and ARID1A. Interacts with MTA1 and MBD3; indicative for an association with the NuRD complex. Interacts with SIRT1. In terms of processing, acetylated on several residues, including Lys-333. Lys-333 is deacetylated by SIRT1. Post-translationally, sumoylated on Lys-333 by a PIAS family member, which enhances interaction with MTA1, positively regulates transcriptional repression activity and is enhanced by HDAC4. As to expression, ubiquitously expressed with highest levels found in lung, colon, prostate, thymus, testis and ovary. Expression is absent or decreased in many tumor cells.

Its subcellular location is the nucleus. Functionally, transcriptional repressor. Recognizes and binds to the consensus sequence '5-[CG]NG[CG]GGGCA[CA]CC-3'. May act as a tumor suppressor. Involved in development of head, face, limbs and ventral body wall. Involved in down-regulation of SIRT1 and thereby is involved in regulation of p53/TP53-dependent apoptotic DNA-damage responses. The specific target gene promoter association seems to be depend on corepressors, such as CTBP1 or CTBP2 and MTA1. In cooperation with MTA1 (indicative for an association with the NuRD complex) represses transcription from CCND1/cyclin-D1 and CDKN1C/p57Kip2 specifically in quiescent cells. Involved in regulation of the Wnt signaling pathway probably by association with TCF7L2 and preventing TCF7L2 and CTNNB1 association with promoters of TCF-responsive genes. Seems to repress transcription from E2F1 and ATOH1 which involves ARID1A, indicative for the participation of a distinct SWI/SNF-type chromatin-remodeling complex. Probably represses transcription of ACKR3, FGFBP1 and EFNA1. This is Hypermethylated in cancer 1 protein (HIC1) from Homo sapiens (Human).